Consider the following 387-residue polypeptide: Sulfopyruvate decarboxylase (387 aa).

The protein belongs to the TPP enzyme family. Thiamine diphosphate serves as cofactor.

It catalyses the reaction 3-sulfopyruvate + H(+) = sulfoacetaldehyde + CO2. It participates in cofactor biosynthesis; coenzyme M biosynthesis. Involved in the biosynthesis of the coenzyme M (2-mercaptoethanesulfonic acid). Catalyzes the decarboxylation of sulfopyruvate to sulfoacetaldehyde. Is not able to decarboxylate the analogous compounds 2-oxoglutarate or 2-oxosuberate. This Methanosarcina acetivorans (strain ATCC 35395 / DSM 2834 / JCM 12185 / C2A) protein is Sulfopyruvate decarboxylase.